A 409-amino-acid chain; its full sequence is O-glucosyltransferase rumi (409 aa).

The first 20 residues, 1–20, serve as a signal peptide directing secretion; it reads MLINVVLIILLVGLNGKASG. 4 disulfides stabilise this stretch: Cys62/Cys73, Cys71/Cys376, Cys118/Cys124, and Cys280/Cys303. The Proton donor/acceptor role is filled by Asp149. Positions 190–195 are interaction with the consensus sequence C-X-S-X-[PA]-C in peptide substrates; the sequence is ATKLHP. UDP-alpha-D-glucose-binding positions include 227–231, Arg235, 274–276, and 292–296; these read RGSRT, VSF, and AASFR. The Prevents secretion from ER motif lies at 406–409; sequence KDEL.

Belongs to the glycosyltransferase 90 family.

It is found in the endoplasmic reticulum lumen. The protein operates within protein modification; protein glycosylation. Protein O-glucosyltransferase. Catalyzes the reaction that attaches glucose through an O-glycosidic linkage to a conserved serine residue found in the consensus sequence C-X-S-X-[PA]-C in epidermal growth factor-like repeats. Regulates Notch signaling by glucosylating Notch in the ER, glucosylation is required for the correct folding and cleavage of Notch. The protein is O-glucosyltransferase rumi of Drosophila pseudoobscura pseudoobscura (Fruit fly).